The sequence spans 816 residues: S-layer protein (816 aa).

A signal peptide spans 1-29 (MAKTNSYKKVIAGTMTAAMVAGVVSPVAA). SLH domains are found at residues 30-93 (AGKS…DAKP), 94-150 (SFAD…KVNG), and 152-215 (PATK…VAKV). Residues 403–480 (FTSKDFKQND…TVKDSKGKEL (78 aa)) form the BIG2 domain.

It localises to the secreted. The protein localises to the cell wall. It is found in the S-layer. Its function is as follows. The S-layer is a paracrystalline mono-layered assembly of proteins which coat the surface of bacteria. This chain is S-layer protein, found in Bacillus thuringiensis subsp. finitimus.